Here is a 434-residue protein sequence, read N- to C-terminus: F-box only protein 15 (434 aa).

An F-box domain is found at 1–41 (MPSEILLKIFSYLDAVSLLCAGCVSRRFYHLANDNFIWIRI).

As to quaternary structure, directly interacts with SKP1 and CUL1.

Its function is as follows. Substrate-recognition component of the SCF (SKP1-CUL1-F-box protein)-type E3 ubiquitin ligase complex. The protein is F-box only protein 15 (FBXO15) of Macaca fascicularis (Crab-eating macaque).